A 454-amino-acid polypeptide reads, in one-letter code: Glutamyl-tRNA(Gln) amidotransferase subunit A (454 aa).

Active-site charge relay system residues include K56 and S131. S155 acts as the Acyl-ester intermediate in catalysis.

Belongs to the amidase family. GatA subfamily. Heterotrimer of A, B and C subunits.

It catalyses the reaction L-glutamyl-tRNA(Gln) + L-glutamine + ATP + H2O = L-glutaminyl-tRNA(Gln) + L-glutamate + ADP + phosphate + H(+). Allows the formation of correctly charged Gln-tRNA(Gln) through the transamidation of misacylated Glu-tRNA(Gln) in organisms which lack glutaminyl-tRNA synthetase. The reaction takes place in the presence of glutamine and ATP through an activated gamma-phospho-Glu-tRNA(Gln). In Campylobacter lari (strain RM2100 / D67 / ATCC BAA-1060), this protein is Glutamyl-tRNA(Gln) amidotransferase subunit A.